A 116-amino-acid polypeptide reads, in one-letter code: Transcription elongation factor SPT4 homolog 1 (116 aa).

A C4-type zinc finger spans residues 19 to 39; the sequence is CLRCRLVKTYDQFRDSGCENC.

Belongs to the SPT4 family.

The protein resides in the nucleus. May regulate transcription elongation by RNA polymerase II. May enhance transcriptional pausing at sites proximal to the promoter, which may in turn facilitate the assembly of an elongation competent RNA polymerase II complex. The chain is Transcription elongation factor SPT4 homolog 1 from Arabidopsis thaliana (Mouse-ear cress).